Here is a 397-residue protein sequence, read N- to C-terminus: Elongation factor Tu (397 aa).

The region spanning 10–206 is the tr-type G domain; sequence KPHCNIGTIG…AVDTWIPDPQ (197 aa). Residues 19–26 are G1; the sequence is GHVDHGKT. 19–26 is a GTP binding site; sequence GHVDHGKT. T26 is a binding site for Mg(2+). The interval 61–65 is G2; it reads GITIS. The tract at residues 82–85 is G3; that stretch reads DCPG. GTP-binding positions include 82 to 86 and 137 to 140; these read DCPGH and NKCD. The tract at residues 137 to 140 is G4; that stretch reads NKCD. A G5 region spans residues 175–177; the sequence is SAL.

It belongs to the TRAFAC class translation factor GTPase superfamily. Classic translation factor GTPase family. EF-Tu/EF-1A subfamily. In terms of assembly, monomer.

The protein localises to the cytoplasm. The enzyme catalyses GTP + H2O = GDP + phosphate + H(+). In terms of biological role, GTP hydrolase that promotes the GTP-dependent binding of aminoacyl-tRNA to the A-site of ribosomes during protein biosynthesis. This chain is Elongation factor Tu, found in Lachnoclostridium phytofermentans (strain ATCC 700394 / DSM 18823 / ISDg) (Clostridium phytofermentans).